The following is a 22-amino-acid chain: Motilin (22 aa).

Positions 1-22 (FVPIFTHSELQKIREKERNKGQ) are disordered. A compositionally biased stretch (basic and acidic residues) spans 9–22 (ELQKIREKERNKGQ).

Belongs to the motilin family.

Its subcellular location is the secreted. Functionally, plays an important role in the regulation of interdigestive gastrointestinal motility and indirectly causes rhythmic contraction of duodenal and colonic smooth muscle. The sequence is that of Motilin (MLN) from Canis lupus familiaris (Dog).